The primary structure comprises 777 residues: Mediator of RNA polymerase II transcription subunit 15 (777 aa).

Disordered stretches follow at residues 120–139 (MNLP…HGIT) and 418–520 (SIPV…EEQQ). Low complexity predominate over residues 420–434 (PVMSSPSPVQQVQTP). A compositionally biased stretch (pro residues) spans 435–448 (QPMPPPPQPSPQPS). Positions 449 to 471 (QPMSQPNSNVSSGPAPSPSSFMP) are enriched in low complexity. Over residues 500-519 (TPGNPNSVMSPASNNQSEEQ) the composition is skewed to polar residues.

This sequence belongs to the Mediator complex subunit 15 family. In terms of assembly, component of the Mediator complex. Interacts with srebf1 and srebf2. Interacts with smad2, smad3 and smad4.

Its subcellular location is the cytoplasm. The protein localises to the nucleus. In terms of biological role, component of the Mediator complex, a coactivator involved in the regulated transcription of nearly all RNA polymerase II-dependent genes. Mediator functions as a bridge to convey information from gene-specific regulatory proteins to the basal RNA polymerase II transcription machinery. Mediator is recruited to promoters by direct interactions with regulatory proteins and serves as a scaffold for the assembly of a functional preinitiation complex with RNA polymerase II and the general transcription factors. Required for cholesterol-dependent gene regulation. Positively regulates the Nodal signaling pathway. The sequence is that of Mediator of RNA polymerase II transcription subunit 15 (med15) from Xenopus laevis (African clawed frog).